A 478-amino-acid polypeptide reads, in one-letter code: Transcript termination protein A18 (478 aa).

A Helicase ATP-binding domain is found at 98–254; it reads KVELKRPMYV…NDVINVSNSS (157 aa). 111 to 118 is a binding site for ATP; that stretch reads LACGFGKT. A DESH box motif is present at residues 204 to 207; sequence DESH. The 148-residue stretch at 307-454 folds into the Helicase C-terminal domain; sequence ILDTIIYDFE…IITLAIEKLG (148 aa).

This sequence belongs to the helicase family. Poxviruses subfamily. Interacts with G2. Might be part of a transcription complex composed at least of G2, A18, and H5.

It localises to the virion. DNA helicase which seems to act as a postreplicative transcription termination factor. Involved in ATP-dependent release of nascent RNA. Forms a stable complex with single-stranded DNA, and to a lesser extent RNA. The polypeptide is Transcript termination protein A18 (Erythrocebus patas (Red guenon)).